A 634-amino-acid chain; its full sequence is MLKVLISPLGVGDTNTDVYKRQYKTAEYKFEGDIDGIESPFVLSVLIEKLKVDKVIVVGTAKSMWEKLYEYYAKEVGEFDEEYWIEIGKKVGMSKYDNYALSEEDLKKIEKVIDKYLKKINPNAVGGSKCKIIKYGIDKDEIWENFDLFMSLINEVNDGDEIYLDITHSFRSIPLFMYVMLEFMRYFKNVKLKGIYYGMLDVIRELGHAPVVDLSPIFEISEWIRGMYEFTTYGNSYLISKLLENEDKEIAEKLQKISRYIDANYLKELREEVKTLKPLLNEKKDTGRFLKYFIPELHKFIDKLKYEDSDFEFQISMAKWNFDNKKYSSGYLCLTDSIFWKLCELYNLPSVYKNREVMKGIIYNPSLNKKYSAFGSIKDMHYKRLRNIRNKIAHADVSKKGDDFNPENDLEDVVNLLKNVNLPDFDKIIEDLLLDVKNNQNNKTLKLLKNILNIQIIRKIIKAYNFESNEIYWDFVSGYLLNKNNKCNNEKLREIIEIFHKNIEDAGELEEAFNFVKNTEDEELLDSLALQNAIMHYALFKLSNAYNIKNKEDKEAIKWVLLNQNLCSKHPILKEINNNYHKIFKNKDKPMSNEILEASKNIIRLLNSDLSEIKDSVPLNLIIIRYRSYKNNRR.

Functionally, CRISPR (clustered regularly interspaced short palindromic repeat) is an adaptive immune system that provides protection against mobile genetic elements (viruses, transposable elements and conjugative plasmids). CRISPR clusters contain spacers, sequences complementary to antecedent mobile elements, and target invading nucleic acids. CRISPR clusters are transcribed and processed into CRISPR RNA (crRNA). The type III Csm effector complex binds crRNA and acts as a crRNA-guided RNase, DNase and cyclic oligoadenylate synthase; binding of target RNA cognate to the crRNA is required for all activities. The chain is CRISPR-associated protein MJ1674 from Methanocaldococcus jannaschii (strain ATCC 43067 / DSM 2661 / JAL-1 / JCM 10045 / NBRC 100440) (Methanococcus jannaschii).